Consider the following 48-residue polypeptide: Delta-stichotoxin-Hcr1b (48 aa).

Cystine bridges form between Cys-3–Cys-43, Cys-5–Cys-33, and Cys-26–Cys-44.

It belongs to the sea anemone sodium channel inhibitory toxin family. Type II subfamily.

It is found in the secreted. The protein localises to the nematocyst. Its function is as follows. Binds to site 3 of voltage-gated sodium channels and inhibits the inactivation process. This chain is Delta-stichotoxin-Hcr1b, found in Radianthus crispa (Leathery sea anemone).